Consider the following 332-residue polypeptide: NADH-quinone oxidoreductase subunit H (332 aa).

9 helical membrane-spanning segments follow: residues 4–24 (FAFF…IFAS), 44–64 (IGPD…MIKL), 78–98 (FIFA…LAAI), 120–140 (VALL…FLGG), 165–185 (VGAL…LVDI), 194–214 (FSWL…ALFI), 255–275 (IAGA…FWII), 279–299 (IMMI…RAAF), and 312–332 (YLIL…AVLL).

It belongs to the complex I subunit 1 family. NDH-1 is composed of 14 different subunits. Subunits NuoA, H, J, K, L, M, N constitute the membrane sector of the complex.

The protein resides in the cell inner membrane. The catalysed reaction is a quinone + NADH + 5 H(+)(in) = a quinol + NAD(+) + 4 H(+)(out). Its function is as follows. NDH-1 shuttles electrons from NADH, via FMN and iron-sulfur (Fe-S) centers, to quinones in the respiratory chain. The immediate electron acceptor for the enzyme in this species is believed to be ubiquinone. Couples the redox reaction to proton translocation (for every two electrons transferred, four hydrogen ions are translocated across the cytoplasmic membrane), and thus conserves the redox energy in a proton gradient. This subunit may bind ubiquinone. This Campylobacter jejuni subsp. jejuni serotype O:6 (strain 81116 / NCTC 11828) protein is NADH-quinone oxidoreductase subunit H.